Here is a 4334-residue protein sequence, read N- to C-terminus: Cytoplasmic dynein 2 heavy chain 1 (4334 aa).

The stem stretch occupies residues 1–1704; it reads MSSDSRKTFV…KVAMAEATFD (1704 aa). 150-157 provides a ligand contact to ATP; it reads LGTAVRKG. The stretch at 1026–1097 forms a coiled coil; it reads QEAKGLTAKL…AHLEEQKGNL (72 aa). AAA stretches follow at residues 1705–1929, 1996–2211, 2299–2544, and 2641–2882; these read YTWE…VLGI, KALA…KAFQ, GMDE…WING, and GYER…SSGS. Residues 1743–1750, 2034–2041, 2334–2341, and 2679–2686 contribute to the ATP site; these read GPAGTGKT, GPSGSGKS, GPEGCGKG, and GNSGVGRR. The interval 2897–3185 is stalk; sequence QIYNRKRTQV…ISVDKAESVL (289 aa). Coiled-coil stretches lie at residues 2930-2998 and 3120-3199; these read LSAE…SEVQ and ERVS…RGEK. 2 AAA regions span residues 3260-3492 and 3701-3917; these read LSSE…TVEK and MSSF…VITL.

Belongs to the dynein heavy chain family. In terms of assembly, the cytoplasmic dynein complex 2 is probably composed by a DHC1B homodimer and a number of D1BLIC light intermediate chains. Interacts with FAP133, FLA10 and LC8.

It is found in the cytoplasm. The protein resides in the cytoskeleton. Its subcellular location is the flagellum basal body. It localises to the cell projection. The protein localises to the cilium. It is found in the flagellum membrane. In terms of biological role, may function as a motor for intraflagellar retrograde transport. Functions in flagellar biogenesis. This chain is Cytoplasmic dynein 2 heavy chain 1 (DHC1B), found in Chlamydomonas reinhardtii (Chlamydomonas smithii).